We begin with the raw amino-acid sequence, 480 residues long: 6-phosphogluconate dehydrogenase, decarboxylating 1 (480 aa).

Residues 10–15 (GLAVMG), 33–35 (NRT), 77–79 (VKA), and Asn105 each bind NADP(+). Substrate contacts are provided by residues Asn105 and 131–133 (SGG). Lys186 (proton acceptor) is an active-site residue. Position 189-190 (189-190 (HN)) interacts with substrate. Glu193 acts as the Proton donor in catalysis. Substrate contacts are provided by Tyr194, Lys264, Arg291, Arg450, and His456.

This sequence belongs to the 6-phosphogluconate dehydrogenase family. Homodimer. In terms of tissue distribution, highly expressed in inflorescence, lowly expressed in root and embryos and almost absent in leaves.

It is found in the cytoplasm. It catalyses the reaction 6-phospho-D-gluconate + NADP(+) = D-ribulose 5-phosphate + CO2 + NADPH. Its pathway is carbohydrate degradation; pentose phosphate pathway; D-ribulose 5-phosphate from D-glucose 6-phosphate (oxidative stage): step 3/3. Its function is as follows. Catalyzes the oxidative decarboxylation of 6-phosphogluconate to ribulose 5-phosphate and CO(2), with concomitant reduction of NADP to NADPH. In Oryza sativa subsp. japonica (Rice), this protein is 6-phosphogluconate dehydrogenase, decarboxylating 1 (G6PGH1).